A 275-amino-acid polypeptide reads, in one-letter code: NH(3)-dependent NAD(+) synthetase (275 aa).

Residue 46 to 53 participates in ATP binding; it reads GISGGQDS. Asp52 provides a ligand contact to Mg(2+). Arg141 is a binding site for deamido-NAD(+). Thr161 contacts ATP. Mg(2+) is bound at residue Glu166. Deamido-NAD(+)-binding residues include Lys174 and Asp181. The ATP site is built by Lys190 and Thr212. 261–262 contributes to the deamido-NAD(+) binding site; the sequence is HK.

It belongs to the NAD synthetase family. As to quaternary structure, homodimer.

It catalyses the reaction deamido-NAD(+) + NH4(+) + ATP = AMP + diphosphate + NAD(+) + H(+). It participates in cofactor biosynthesis; NAD(+) biosynthesis; NAD(+) from deamido-NAD(+) (ammonia route): step 1/1. Functionally, catalyzes the ATP-dependent amidation of deamido-NAD to form NAD. Uses ammonia as a nitrogen source. This chain is NH(3)-dependent NAD(+) synthetase, found in Limosilactobacillus reuteri (strain DSM 20016) (Lactobacillus reuteri).